The chain runs to 431 residues: Ribosomal protein uS12 methylthiotransferase RimO (431 aa).

Residues histidine 4–histidine 120 form the MTTase N-terminal domain. [4Fe-4S] cluster contacts are provided by cysteine 13, cysteine 49, cysteine 83, cysteine 144, cysteine 148, and cysteine 151. The Radical SAM core domain maps to leucine 130 to aspartate 359. Residues arginine 362–glycine 429 form the TRAM domain.

It belongs to the methylthiotransferase family. RimO subfamily. [4Fe-4S] cluster serves as cofactor.

The protein localises to the cytoplasm. The catalysed reaction is L-aspartate(89)-[ribosomal protein uS12]-hydrogen + (sulfur carrier)-SH + AH2 + 2 S-adenosyl-L-methionine = 3-methylsulfanyl-L-aspartate(89)-[ribosomal protein uS12]-hydrogen + (sulfur carrier)-H + 5'-deoxyadenosine + L-methionine + A + S-adenosyl-L-homocysteine + 2 H(+). Its function is as follows. Catalyzes the methylthiolation of an aspartic acid residue of ribosomal protein uS12. This chain is Ribosomal protein uS12 methylthiotransferase RimO, found in Pelodictyon phaeoclathratiforme (strain DSM 5477 / BU-1).